A 343-amino-acid chain; its full sequence is Uroporphyrinogen decarboxylase (343 aa).

Residues 23–27 (RQAGR), Asp-73, Tyr-151, Ser-206, and His-322 each bind substrate.

It belongs to the uroporphyrinogen decarboxylase family. In terms of assembly, homodimer.

Its subcellular location is the cytoplasm. The catalysed reaction is uroporphyrinogen III + 4 H(+) = coproporphyrinogen III + 4 CO2. It participates in porphyrin-containing compound metabolism; protoporphyrin-IX biosynthesis; coproporphyrinogen-III from 5-aminolevulinate: step 4/4. Catalyzes the decarboxylation of four acetate groups of uroporphyrinogen-III to yield coproporphyrinogen-III. The protein is Uroporphyrinogen decarboxylase of Granulibacter bethesdensis (strain ATCC BAA-1260 / CGDNIH1).